Consider the following 181-residue polypeptide: Histone H1 (181 aa).

Disordered regions lie at residues 1–23 and 81–181; these read MTETTSAKPKKVSKPKAKPTHPP and TKGA…PKKK. Positions 8-19 are enriched in basic residues; that stretch reads KPKKVSKPKAKP. The region spanning 20-94 is the H15 domain; that stretch reads THPPTSVMVM…GASGSFKLAA (75 aa). Composition is skewed to basic residues over residues 103 to 119 and 145 to 181; these read AVAKPKKAKTPKKKAAA and KPKKAKTPKKKAAPAKKTPVKKVKKTSPKKKAAPKKK.

It belongs to the histone H1/H5 family.

The protein resides in the nucleus. It is found in the chromosome. Histones H1 are necessary for the condensation of nucleosome chains into higher-order structures. In Tigriopus californicus (Marine copepod), this protein is Histone H1.